A 138-amino-acid chain; its full sequence is Putative pre-16S rRNA nuclease (138 aa).

Belongs to the YqgF nuclease family.

Its subcellular location is the cytoplasm. In terms of biological role, could be a nuclease involved in processing of the 5'-end of pre-16S rRNA. The polypeptide is Putative pre-16S rRNA nuclease (Escherichia fergusonii (strain ATCC 35469 / DSM 13698 / CCUG 18766 / IAM 14443 / JCM 21226 / LMG 7866 / NBRC 102419 / NCTC 12128 / CDC 0568-73)).